Consider the following 425-residue polypeptide: Trigger factor (425 aa).

The PPIase FKBP-type domain occupies 158-231; sequence GDLVRISMEV…VQEVYRRTLP (74 aa).

Belongs to the FKBP-type PPIase family. Tig subfamily.

The protein resides in the cytoplasm. The catalysed reaction is [protein]-peptidylproline (omega=180) = [protein]-peptidylproline (omega=0). Involved in protein export. Acts as a chaperone by maintaining the newly synthesized protein in an open conformation. Functions as a peptidyl-prolyl cis-trans isomerase. This Thermotoga neapolitana (strain ATCC 49049 / DSM 4359 / NBRC 107923 / NS-E) protein is Trigger factor.